The sequence spans 388 residues: 4-hydroxycoumarin synthase 2 (388 aa).

Cysteine 159 is a catalytic residue.

This sequence belongs to the thiolase-like superfamily. Chalcone/stilbene synthases family. In terms of assembly, homodimer.

The catalysed reaction is 2-hydroxybenzoyl-CoA + malonyl-CoA = 4-hydroxycoumarin + CO2 + 2 CoA. Functionally, type III polyketide synthase involved preferentially in the biosynthesis of 4-hydroxycoumarin from salicoyl-CoA. Can also use benzoyl-CoA and malonyl-CoA to produce 3,5-dihydroxybiphenyl as a major product and benzoyldiacetic acid lactone as a minor side product. Can also use m-hydroxybenzoyl-CoA as substrate, producing m-hydroxybenzoyl diacetic acid lactone as a derailment product. No activity with p-hydroxybenzoyl-CoA, CoA-linked cinnamic acids or acetyl-CoA. The sequence is that of 4-hydroxycoumarin synthase 2 (BIS3) from Sorbus aucuparia (European mountain ash).